Consider the following 94-residue polypeptide: Large ribosomal subunit protein uL23c (94 aa).

It belongs to the universal ribosomal protein uL23 family. Part of the 50S ribosomal subunit.

Its subcellular location is the plastid. The protein resides in the chloroplast. Its function is as follows. Binds to 23S rRNA. The chain is Large ribosomal subunit protein uL23c (rpl23) from Tupiella akineta (Green alga).